The chain runs to 206 residues: Probable nicotinate-nucleotide adenylyltransferase (206 aa).

It belongs to the NadD family.

The enzyme catalyses nicotinate beta-D-ribonucleotide + ATP + H(+) = deamido-NAD(+) + diphosphate. Its pathway is cofactor biosynthesis; NAD(+) biosynthesis; deamido-NAD(+) from nicotinate D-ribonucleotide: step 1/1. Its function is as follows. Catalyzes the reversible adenylation of nicotinate mononucleotide (NaMN) to nicotinic acid adenine dinucleotide (NaAD). The sequence is that of Probable nicotinate-nucleotide adenylyltransferase from Paenarthrobacter aurescens (strain TC1).